Reading from the N-terminus, the 152-residue chain is SUZ RNA-binding domain-containing (152 aa).

Met1 is subject to N-acetylmethionine. The interval 30–152 is disordered; it reads TQKESRKSKS…DGSQGFKQRR (123 aa). Ser37, Ser39, and Ser51 each carry phosphoserine. Residues 42–107 enclose the SUZ domain; it reads KVPIVIQDDS…ARKRILGSAS (66 aa). Polar residues predominate over residues 66 to 81; the sequence is PTSNGVVSSPNSTSRP. Residues 89 to 100 are compositionally biased toward basic and acidic residues; it reads AQREAEYAEARK. Phosphoserine is present on residues Ser105 and Ser107. One can recognise an SUZ-C domain in the interval 111–152; that stretch reads EQEKPILDRPTRISQPEDSRQPNNVIRQPLGPDGSQGFKQRR. Basic and acidic residues predominate over residues 113 to 130; it reads EKPILDRPTRISQPEDSR.

Belongs to the SZRD1 family.

This chain is SUZ RNA-binding domain-containing (SZRD1), found in Homo sapiens (Human).